A 143-amino-acid polypeptide reads, in one-letter code: MFMGEFLHSIDTKGRIIVPSKFRDNLGSSFVVTRGLDKCLFAYPMDEWKILEEKLKQLPLTKKDARAFTRFFFSGAIECEVDKQGRINIPANLRNYAGLEKDCNVIGVSNRVEFWANDAWEDYVTESEDSFAEIAENLMDFDI.

2 SpoVT-AbrB domains span residues 5–47 (EFLH…PMDE) and 76–119 (AIEC…ANDA).

It belongs to the MraZ family. In terms of assembly, forms oligomers.

It localises to the cytoplasm. The protein localises to the nucleoid. This Oceanobacillus iheyensis (strain DSM 14371 / CIP 107618 / JCM 11309 / KCTC 3954 / HTE831) protein is Transcriptional regulator MraZ.